The sequence spans 377 residues: Mitogen-activated protein kinase mpkC (377 aa).

The 280-residue stretch at 20–299 (YVNPQPIGMG…AQDALRHPYL (280 aa)) folds into the Protein kinase domain. ATP is bound by residues 26 to 34 (IGMGSFGLV) and lysine 49. Aspartate 141 serves as the catalytic Proton acceptor. The residue at position 171 (threonine 171) is a Phosphothreonine. A TXY motif is present at residues 171–173 (TGY). Tyrosine 173 carries the post-translational modification Phosphotyrosine.

The protein belongs to the protein kinase superfamily. Ser/Thr protein kinase family. MAP kinase subfamily. HOG1 sub-subfamily. It depends on Mg(2+) as a cofactor. In terms of processing, dually phosphorylated on Thr-171 and Tyr-173, which activates the enzyme.

The catalysed reaction is L-seryl-[protein] + ATP = O-phospho-L-seryl-[protein] + ADP + H(+). It carries out the reaction L-threonyl-[protein] + ATP = O-phospho-L-threonyl-[protein] + ADP + H(+). Its activity is regulated as follows. Activated by tyrosine and threonine phosphorylation. Functionally, mitogen-activated protein kinase required for growth on media where sorbitol or mannitol is the sole carbon source. This Neosartorya fischeri (strain ATCC 1020 / DSM 3700 / CBS 544.65 / FGSC A1164 / JCM 1740 / NRRL 181 / WB 181) (Aspergillus fischerianus) protein is Mitogen-activated protein kinase mpkC (mpkc).